Here is a 489-residue protein sequence, read N- to C-terminus: Pluviatolide synthase (489 aa).

A helical membrane pass occupies residues 6-26; the sequence is SVLAMSSTLILALAMALIFLF. Cys-432 contacts heme.

It belongs to the cytochrome P450 family. Requires heme as cofactor. Expressed in leaves, rhizomes and stems.

It is found in the membrane. The enzyme catalyses (-)-matairesinol + reduced [NADPH--hemoprotein reductase] + O2 = (-)-pluviatolide + oxidized [NADPH--hemoprotein reductase] + 2 H2O + H(+). The protein operates within aromatic compound metabolism; phenylpropanoid biosynthesis. Cytochrome P450 involved in the biosynthesis of etoposide, a chemotherapeutic compound of the topoisomerase inhibitor family. Catalyzes the conversion of matairesinol to pluviatolide. The sequence is that of Pluviatolide synthase from Sinopodophyllum hexandrum (Himalayan may apple).